Reading from the N-terminus, the 103-residue chain is MVYIASWDEFVDRSVQLFRADPESTRYVMKYRHCDGKLVLKVTDNKECLKFKTDQAQEAKKMEKLNNIFFTLMARGPDVDLSEVTGKEQMETQPAKKGRGRKQ.

Residues 81 to 103 (LSEVTGKEQMETQPAKKGRGRKQ) form a disordered region.

Belongs to the SRP9 family. In terms of assembly, heterodimer with SRP14; binds RNA as heterodimer. Component of a signal recognition particle complex that consists of a 7SL RNA molecule and six protein subunits: srp72, srp68, srp54, srp19, srp14 and srp9.

The protein localises to the cytoplasm. Component of the signal recognition particle (SRP) complex, a ribonucleoprotein complex that mediates the cotranslational targeting of secretory and membrane proteins to the endoplasmic reticulum (ER). SRP9 together with SRP14 and the Alu portion of the SRP RNA, constitutes the elongation arrest domain of SRP. The complex of SRP9 and SRP14 is required for SRP RNA binding. The chain is Signal recognition particle 9 kDa protein (SRP9) from Arabidopsis thaliana (Mouse-ear cress).